A 244-amino-acid polypeptide reads, in one-letter code: Ubiquinone/menaquinone biosynthesis C-methyltransferase UbiE (244 aa).

Residues Thr-70, Asp-91, and 117-118 (DA) contribute to the S-adenosyl-L-methionine site.

It belongs to the class I-like SAM-binding methyltransferase superfamily. MenG/UbiE family.

The enzyme catalyses a 2-demethylmenaquinol + S-adenosyl-L-methionine = a menaquinol + S-adenosyl-L-homocysteine + H(+). The catalysed reaction is a 2-methoxy-6-(all-trans-polyprenyl)benzene-1,4-diol + S-adenosyl-L-methionine = a 5-methoxy-2-methyl-3-(all-trans-polyprenyl)benzene-1,4-diol + S-adenosyl-L-homocysteine + H(+). It functions in the pathway quinol/quinone metabolism; menaquinone biosynthesis; menaquinol from 1,4-dihydroxy-2-naphthoate: step 2/2. Its pathway is cofactor biosynthesis; ubiquinone biosynthesis. Its function is as follows. Methyltransferase required for the conversion of demethylmenaquinol (DMKH2) to menaquinol (MKH2) and the conversion of 2-polyprenyl-6-methoxy-1,4-benzoquinol (DDMQH2) to 2-polyprenyl-3-methyl-6-methoxy-1,4-benzoquinol (DMQH2). The polypeptide is Ubiquinone/menaquinone biosynthesis C-methyltransferase UbiE (Nitrosospira multiformis (strain ATCC 25196 / NCIMB 11849 / C 71)).